The primary structure comprises 102 residues: Keratinocyte differentiation-associated protein (102 aa).

A signal peptide spans 1–22; the sequence is MKIPILPVVALLSLLALHAVQG.

As to expression, expression restricted to suprabasal keratinocytes of the epidermis.

It is found in the secreted. May act as a soluble regulator of keratinocyte differentiation. May play an important role in embryonic skin morphogenesis. The protein is Keratinocyte differentiation-associated protein of Mus musculus (Mouse).